The following is a 94-amino-acid chain: Integration host factor subunit beta (94 aa).

This sequence belongs to the bacterial histone-like protein family. As to quaternary structure, heterodimer of an alpha and a beta chain.

Its function is as follows. This protein is one of the two subunits of integration host factor, a specific DNA-binding protein that functions in genetic recombination as well as in transcriptional and translational control. The sequence is that of Integration host factor subunit beta from Nitrosospira multiformis (strain ATCC 25196 / NCIMB 11849 / C 71).